Consider the following 204-residue polypeptide: 3-isopropylmalate dehydratase small subunit (204 aa).

It belongs to the LeuD family. LeuD type 1 subfamily. In terms of assembly, heterodimer of LeuC and LeuD.

It carries out the reaction (2R,3S)-3-isopropylmalate = (2S)-2-isopropylmalate. The protein operates within amino-acid biosynthesis; L-leucine biosynthesis; L-leucine from 3-methyl-2-oxobutanoate: step 2/4. In terms of biological role, catalyzes the isomerization between 2-isopropylmalate and 3-isopropylmalate, via the formation of 2-isopropylmaleate. In Chloroflexus aggregans (strain MD-66 / DSM 9485), this protein is 3-isopropylmalate dehydratase small subunit.